A 237-amino-acid chain; its full sequence is Ribosomally synthesized cyclic peptide ustiloxin B precursosr (237 aa).

A signal peptide spans 1–19 (MKLILTLLVSGLCALAAPA). 2 propeptides span residues 20-22 (AKR) and 234-237 (HGGH).

UstA is processed by the subtilisin-like endoprotease kex2 that is outside the ustiloxin B gene cluster, at the C-terminal side of Arg-Lys, after transfer to Golgi apparatus through the endoplasmic reticulum (ER). Cleavage by kex2 generates 16 peptides YAIG-I to YAIG-XVI. To process the precursor peptide further, at least two peptidases are necessary to cleave the N-terminal and C-terminal sides of the Tyr-Ala-Ile-Gly core peptide which serves as backbone for the synthesis of ustiloxin B, through cyclization and modification of the tyrosine. One of the two peptidases must be the serine peptidase ustP; and the other pepdidase is probably ustH. Macrocyclization of the core peptide derived from ustA requires the tyrosinase ustQ, as well as the homologous oxidases ustYa and ustYb, and leads to the production of the first cyclization product N-desmethylustiloxin F. For the formation of N-desmethylustiloxin F, three oxidation steps are required, hydroxylation at the benzylic position, hydroxylation at either the aromatic ring of Tyr or beta-position of Ile, and oxidative cyclization. UstQ may catalyze the oxidation of a phenol moiety, whereas the ustYa and ustYb are most likely responsible for the remaining two-step oxidations. N-desmethylustiloxin F is then methylated by ustM to yield ustiloxin F which in turn substrate of the cytochrome P450 monooxygenase ustC which catalyzes the formation of S-deoxyustiloxin H. The flavoprotein monooxygenases ustF1 and ustF2 then participate in the modification of the side chain of S-deoxyustiloxin H, leading to the synthesis of an oxime intermediate, via ustiloxin H. Finally, carboxylative dehydration performed by the cysteine desulfurase-like protein ustD yields ustiloxin B.

Its pathway is mycotoxin biosynthesis. Ribosomally synthesized cyclic peptide ustiloxin B precursor: Part of the gene cluster that mediates the biosynthesis of the secondary metabolite ustiloxin B, an antimitotic tetrapeptide. The ustA translated product contains a 16-fold repeated peptide embedding the tetrapeptide Tyr-Ala-Ile-Gly, that is converted into the cyclic moiety of ustiloxin B. The chain is Ribosomally synthesized cyclic peptide ustiloxin B precursosr from Aspergillus flavus (strain ATCC 200026 / FGSC A1120 / IAM 13836 / NRRL 3357 / JCM 12722 / SRRC 167).